The following is a 311-amino-acid chain: Mycothiol acetyltransferase (311 aa).

Residue Glu35 participates in 1D-myo-inositol 2-(L-cysteinylamino)-2-deoxy-alpha-D-glucopyranoside binding. Residue 79-81 (LVV) participates in acetyl-CoA binding. Residues 155-311 (VRTYVGTVDD…TAYALARIDD (157 aa)) enclose the N-acetyltransferase domain. 1D-myo-inositol 2-(L-cysteinylamino)-2-deoxy-alpha-D-glucopyranoside-binding residues include Glu180, Lys225, and Glu235. Acetyl-CoA contacts are provided by residues 239 to 241 (LGV) and 246 to 252 (QGRGLGQ). Residue Tyr278 participates in 1D-myo-inositol 2-(L-cysteinylamino)-2-deoxy-alpha-D-glucopyranoside binding. 283-288 (NVAAAR) is a binding site for acetyl-CoA.

Belongs to the acetyltransferase family. MshD subfamily. In terms of assembly, monomer.

It catalyses the reaction 1D-myo-inositol 2-(L-cysteinylamino)-2-deoxy-alpha-D-glucopyranoside + acetyl-CoA = mycothiol + CoA + H(+). Functionally, catalyzes the transfer of acetyl from acetyl-CoA to desacetylmycothiol (Cys-GlcN-Ins) to form mycothiol. In Mycobacterium leprae (strain Br4923), this protein is Mycothiol acetyltransferase.